The chain runs to 316 residues: MSKLNIIFAGTPEFAAQHLQALLASQHNIVAVYTQPDKPAGRGKKLQASPVKQLALQHNIPVYQPKSLRNPQAQAELNALNGDVMVVVAYGLILPEAVLHIPRYGCLNVHGSLLPRWRGAAPIQRAIWAGDQETGVTIMQMDAGLDTGDMLHKVSTKIEADETSASLYMKLAKLAPPALLAVLDGLTEQQFKPEKQDNQLANYAEKLSKQEAKLDWNLPAYQLAQNIRAFNPWPMSFLTVEVEGVEQHVKVYQATVLAHQYHAVGTVLQVDKNGIQIATSEGVLNITQLQPQGKKPMSVQDFLNGRANWFSLGKKL.

S112 to P115 lines the (6S)-5,6,7,8-tetrahydrofolate pocket.

Belongs to the Fmt family.

The catalysed reaction is L-methionyl-tRNA(fMet) + (6R)-10-formyltetrahydrofolate = N-formyl-L-methionyl-tRNA(fMet) + (6S)-5,6,7,8-tetrahydrofolate + H(+). Functionally, attaches a formyl group to the free amino group of methionyl-tRNA(fMet). The formyl group appears to play a dual role in the initiator identity of N-formylmethionyl-tRNA by promoting its recognition by IF2 and preventing the misappropriation of this tRNA by the elongation apparatus. This is Methionyl-tRNA formyltransferase from Haemophilus ducreyi (strain 35000HP / ATCC 700724).